Here is a 375-residue protein sequence, read N- to C-terminus: Actin, cytoplasmic (375 aa).

This sequence belongs to the actin family.

The protein resides in the cytoplasm. It is found in the cytoskeleton. The enzyme catalyses ATP + H2O = ADP + phosphate + H(+). In terms of biological role, actins are highly conserved proteins that are involved in various types of cell motility and are ubiquitously expressed in all eukaryotic cells. This chain is Actin, cytoplasmic, found in Sterkiella nova (Ciliate).